Consider the following 349-residue polypeptide: GMP reductase (349 aa).

108–131 is an NADP(+) binding site; sequence IDFLKIKKIFLLSSELKYICIDVA. K(+) is bound by residues Gly181 and Gly183. Residue Cys186 is the Thioimidate intermediate of the active site. 216-239 provides a ligand contact to NADP(+); it reads IISDGGCTVSGDIAKAFGGGADFV.

It belongs to the IMPDH/GMPR family. GuaC type 1 subfamily. In terms of assembly, homotetramer.

It carries out the reaction IMP + NH4(+) + NADP(+) = GMP + NADPH + 2 H(+). Catalyzes the irreversible NADPH-dependent deamination of GMP to IMP. It functions in the conversion of nucleobase, nucleoside and nucleotide derivatives of G to A nucleotides, and in maintaining the intracellular balance of A and G nucleotides. This is GMP reductase from Buchnera aphidicola subsp. Acyrthosiphon pisum (strain Tuc7).